Reading from the N-terminus, the 398-residue chain is Succinate--CoA ligase [ADP-forming] subunit beta (398 aa).

The region spanning 9–253 (MALLNERGVS…AGASDPLEQE (245 aa)) is the ATP-grasp domain. ATP-binding positions include Lys-46, 53-55 (GRG), Val-111, and Glu-116. Asn-208 and Asp-222 together coordinate Mg(2+). Substrate is bound by residues Asn-273 and 330 to 332 (GIM).

Belongs to the succinate/malate CoA ligase beta subunit family. Heterotetramer of two alpha and two beta subunits. Mg(2+) serves as cofactor.

It catalyses the reaction succinate + ATP + CoA = succinyl-CoA + ADP + phosphate. The catalysed reaction is GTP + succinate + CoA = succinyl-CoA + GDP + phosphate. Its pathway is carbohydrate metabolism; tricarboxylic acid cycle; succinate from succinyl-CoA (ligase route): step 1/1. Functionally, succinyl-CoA synthetase functions in the citric acid cycle (TCA), coupling the hydrolysis of succinyl-CoA to the synthesis of either ATP or GTP and thus represents the only step of substrate-level phosphorylation in the TCA. The beta subunit provides nucleotide specificity of the enzyme and binds the substrate succinate, while the binding sites for coenzyme A and phosphate are found in the alpha subunit. The sequence is that of Succinate--CoA ligase [ADP-forming] subunit beta from Zymomonas mobilis subsp. mobilis (strain ATCC 31821 / ZM4 / CP4).